A 564-amino-acid polypeptide reads, in one-letter code: Keratin, type II cytoskeletal 6A (564 aa).

Residues 1–11 are compositionally biased toward low complexity; the sequence is MASTSTTIRSH. The tract at residues 1–23 is disordered; sequence MASTSTTIRSHSSSRRGFSANSA. The residue at position 2 (Ala2) is an N-acetylalanine. The tract at residues 2-162 is head; it reads ASTSTTIRSH…DPTIQRVRAE (161 aa). Positions 163–198 are coil 1A; it reads EREQIKTLNNKFASFIDKVRFLEQQNKVLETKWTLL. Residues 163–476 form the IF rod domain; that stretch reads EREQIKTLNN…KLLEGEECRL (314 aa). The interval 199 to 217 is linker 1; that stretch reads QEQGTKTVRQNLEPLFEQY. Residues 218–309 form a coil 1B region; sequence INNLRRQLDS…ALYDAELSQM (92 aa). Residues 310 to 333 form a linker 12 region; the sequence is QTHISDTSVVLSMDNNRNLDLDSI. Residues 334-472 form a coil 2 region; the sequence is IAEVKAQYEE…ATYRKLLEGE (139 aa). Residues 473 to 564 form a tail region; sequence ECRLNGEGVG…SSSSRKSYKH (92 aa).

Belongs to the intermediate filament family. Heterodimer of a type I and a type II keratin. KRT6 isomers associate with KRT16 and/or KRT17. Interacts with TCHP. Expressed in the corneal epithelium (at protein level).

In terms of biological role, epidermis-specific type I keratin involved in wound healing. Involved in the activation of follicular keratinocytes after wounding, while it does not play a major role in keratinocyte proliferation or migration. Participates in the regulation of epithelial migration by inhibiting the activity of SRC during wound repair. In Homo sapiens (Human), this protein is Keratin, type II cytoskeletal 6A (KRT6A).